A 2452-amino-acid polypeptide reads, in one-letter code: Lovastatin diketide synthase lovF (2452 aa).

Positions 10-381 (PAPIAVVGMG…GANAHAIVER (372 aa)) constitute a Ketosynthase family 3 (KS3) domain. Catalysis depends on for beta-ketoacyl synthase activity residues Cys173, His308, and His343. The interval 496–790 (VFTGQGAQWF…PYLSCLSRGK (295 aa)) is malonyl-CoA:ACP transacylase (MAT) domain. Residue Ser555 is the For malonyltransferase activity of the active site. The segment at 861–998 (HDLIGLQEPL…GLVRVDMDQP (138 aa)) is N-terminal hotdog fold. The segment at 861-1166 (HDLIGLQEPL…LEGLVFQSLG (306 aa)) is dehydratase (DH) domain. Positions 861–1171 (HDLIGLQEPL…FQSLGASLGT (311 aa)) constitute a PKS/mFAS DH domain. His893 serves as the catalytic Proton acceptor; for dehydratase activity. The segment at 997-1017 (QPASSLSNPQRADPRPWSRKT) is disordered. Residues 1012 to 1171 (PWSRKTAPQD…FQSLGASLGT (160 aa)) form a C-terminal hotdog fold region. The active-site Proton donor; for dehydratase activity is Asp1079. Positions 1343–1528 (ELVRLCCHKN…RDCDSDEFYM (186 aa)) are methyltransferase (CMet) domain. Residues 1745-2064 (GLLDSLYFRK…SGQHVGKIVV (320 aa)) are enoylreductase (ER) domain. The interval 2088–2260 (SYLVAGGLGG…AVTIDLGMVQ (173 aa)) is ketoreductase (KR) domain. The region spanning 2373–2450 (ASIAVIMEAM…KVAEVVLQRY (78 aa)) is the Carrier domain. Position 2410 is an O-(pantetheine 4'-phosphoryl)serine (Ser2410).

As to quaternary structure, interacts with LovD. Pantetheine 4'-phosphate serves as cofactor.

It catalyses the reaction holo-[2-methylbutanoate polyketide synthase] + 2 malonyl-CoA + S-adenosyl-L-methionine + 2 NADPH + 3 H(+) = (S)-2-methylbutanoyl-[2-methylbutanoate polyketide synthase] + S-adenosyl-L-homocysteine + 2 CO2 + 2 NADP(+) + 2 CoA + H2O. Its pathway is polyketide biosynthesis; lovastatin biosynthesis. Functionally, lovastatin diketide synthase; part of the gene cluster that mediates the biosynthesis of lovastatin (also known as mevinolin, mevacor or monacolin K), a hypolipidemic inhibitor of (3S)-hydroxymethylglutaryl-coenzyme A (HMG-CoA) reductase (HMGR). The first step in the biosynthesis of lovastatin is the production of dihydromonacolin L acid by the lovastatin nonaketide synthase lovB and the trans-acting enoyl reductase lovC via condensation of one acetyl-CoA unit and 8 malonyl-CoA units. Dihydromonacolin L acid is released from lovB by the thioesterase lovG. Next, dihydromonacolin L acid is oxidized by the dihydromonacolin L monooxygenase lovA twice to form monacolin J acid. The 2-methylbutyrate moiety of lovastatin is synthesized by the lovastatin diketide synthase lovF via condensation of one acetyl-CoA unit and one malonyl-CoA unit. Finally, the covalent attachment of this moiety to monacolin J acid is catalyzed by the transesterase lovD to yield lovastatin. LovD has broad substrate specificity and can also convert monacolin J to simvastatin using alpha-dimethylbutanoyl-S-methyl-3-mercaptopropionate (DMB-S-MMP) as the thioester acyl donor, and can also catalyze the reverse reaction and function as hydrolase in vitro. LovD has much higher activity with LovF-bound 2-methylbutanoate than with free diketide substrates. The protein is Lovastatin diketide synthase lovF of Aspergillus terreus (strain NIH 2624 / FGSC A1156).